A 486-amino-acid polypeptide reads, in one-letter code: 2-isopropylmalate synthase (486 aa).

Positions 4 to 266 (VYIFDTTLRD…KTDVNLKEIA (263 aa)) constitute a Pyruvate carboxyltransferase domain. The Mn(2+) site is built by Asp13, His201, His203, and Asn237. The segment at 390–486 (KVEIIHVTSG…LSTDIIEASA (97 aa)) is regulatory domain.

It belongs to the alpha-IPM synthase/homocitrate synthase family. LeuA type 1 subfamily. Mn(2+) is required as a cofactor.

The protein resides in the cytoplasm. It catalyses the reaction 3-methyl-2-oxobutanoate + acetyl-CoA + H2O = (2S)-2-isopropylmalate + CoA + H(+). It participates in amino-acid biosynthesis; L-leucine biosynthesis; L-leucine from 3-methyl-2-oxobutanoate: step 1/4. In terms of biological role, catalyzes the condensation of the acetyl group of acetyl-CoA with 3-methyl-2-oxobutanoate (2-ketoisovalerate) to form 3-carboxy-3-hydroxy-4-methylpentanoate (2-isopropylmalate). This Pyrococcus abyssi (strain GE5 / Orsay) protein is 2-isopropylmalate synthase.